The primary structure comprises 339 residues: Aspartate carbamoyltransferase catalytic subunit (339 aa).

Carbamoyl phosphate-binding residues include Arg59 and Thr60. Lys87 is an L-aspartate binding site. Residues Arg109, His142, and Gln145 each coordinate carbamoyl phosphate. Positions 182 and 253 each coordinate L-aspartate. Residues Gly294 and Pro295 each coordinate carbamoyl phosphate.

It belongs to the aspartate/ornithine carbamoyltransferase superfamily. ATCase family. As to quaternary structure, heterododecamer (2C3:3R2) of six catalytic PyrB chains organized as two trimers (C3), and six regulatory PyrI chains organized as three dimers (R2).

The catalysed reaction is carbamoyl phosphate + L-aspartate = N-carbamoyl-L-aspartate + phosphate + H(+). It functions in the pathway pyrimidine metabolism; UMP biosynthesis via de novo pathway; (S)-dihydroorotate from bicarbonate: step 2/3. Its function is as follows. Catalyzes the condensation of carbamoyl phosphate and aspartate to form carbamoyl aspartate and inorganic phosphate, the committed step in the de novo pyrimidine nucleotide biosynthesis pathway. The protein is Aspartate carbamoyltransferase catalytic subunit of Prochlorococcus marinus (strain NATL2A).